A 174-amino-acid chain; its full sequence is ATP synthase subunit b (174 aa).

The helical transmembrane segment at 9-29 threads the bilayer; that stretch reads LPNTSLIFWEVVTFLILLALL.

This sequence belongs to the ATPase B chain family. F-type ATPases have 2 components, F(1) - the catalytic core - and F(0) - the membrane proton channel. F(1) has five subunits: alpha(3), beta(3), gamma(1), delta(1), epsilon(1). F(0) has three main subunits: a(1), b(2) and c(10-14). The alpha and beta chains form an alternating ring which encloses part of the gamma chain. F(1) is attached to F(0) by a central stalk formed by the gamma and epsilon chains, while a peripheral stalk is formed by the delta and b chains.

The protein localises to the cell membrane. F(1)F(0) ATP synthase produces ATP from ADP in the presence of a proton or sodium gradient. F-type ATPases consist of two structural domains, F(1) containing the extramembraneous catalytic core and F(0) containing the membrane proton channel, linked together by a central stalk and a peripheral stalk. During catalysis, ATP synthesis in the catalytic domain of F(1) is coupled via a rotary mechanism of the central stalk subunits to proton translocation. Its function is as follows. Component of the F(0) channel, it forms part of the peripheral stalk, linking F(1) to F(0). This Rubrobacter xylanophilus (strain DSM 9941 / JCM 11954 / NBRC 16129 / PRD-1) protein is ATP synthase subunit b.